The chain runs to 386 residues: Hemagglutinin-esterase (386 aa).

The N-terminal stretch at 1 to 11 (MLIIFLFFYFC) is a signal peptide. The tract at residues 1 to 121 (MLIIFLFFYF…SNDVWLLNKV (121 aa)) is esterase domain 1. At 12–359 (YGFNEPLNVV…PICVYDFLPI (348 aa)) the chain is on the virion surface side. Serine 34 acts as the Nucleophile in catalysis. Cysteine 38 and cysteine 59 are oxidised to a cystine. N-linked (GlcNAc...) asparagine; by host glycans are attached at residues asparagine 83, asparagine 110, asparagine 145, and asparagine 168. Cysteine 107 and cysteine 154 form a disulfide bridge. The segment at 122–236 (RFYRALYSNM…GSYKVSTTAP (115 aa)) is receptor binding. Disulfide bonds link cysteine 180–cysteine 246, cysteine 188–cysteine 219, and cysteine 277–cysteine 282. The interval 237-349 (FLSLPTKALC…RCPTSSIIKH (113 aa)) is esterase domain 2. The N-linked (GlcNAc...) asparagine; by host glycan is linked to asparagine 286. Active-site charge relay system residues include aspartate 296 and histidine 299. Cysteine 317 and cysteine 341 form a disulfide bridge. Residue asparagine 328 is glycosylated (N-linked (GlcNAc...) asparagine; by host). A helical transmembrane segment spans residues 360 to 380 (ILQGILLCLALLFVVFLLFLL). The Intravirion segment spans residues 381–386 (YNDKSH).

This sequence belongs to the influenza type C/coronaviruses hemagglutinin-esterase family. As to quaternary structure, homodimer; disulfide-linked. Forms a complex with the M protein in the pre-Golgi. Associates then with S-M complex to form a ternary complex S-M-HE. In terms of processing, N-glycosylated in the host RER.

It is found in the virion membrane. The protein localises to the host cell membrane. It carries out the reaction N-acetyl-9-O-acetylneuraminate + H2O = N-acetylneuraminate + acetate + H(+). The enzyme catalyses N-acetyl-4-O-acetylneuraminate + H2O = N-acetylneuraminate + acetate + H(+). In terms of biological role, structural protein that makes short spikes at the surface of the virus. Contains receptor binding and receptor-destroying activities. Mediates de-O-acetylation of N-acetyl-4-O-acetylneuraminic acid, which is probably the receptor determinant recognized by the virus on the surface of erythrocytes and susceptible cells. This receptor-destroying activity is important for virus release as it probably helps preventing self-aggregation and ensures the efficient spread of the progeny virus from cell to cell. May serve as a secondary viral attachment protein for initiating infection, the spike protein being the major one. May become a target for both the humoral and the cellular branches of the immune system. This chain is Hemagglutinin-esterase, found in Homo sapiens (Human).